A 129-amino-acid chain; its full sequence is Small ribosomal subunit protein uS11 (129 aa).

This sequence belongs to the universal ribosomal protein uS11 family. As to quaternary structure, part of the 30S ribosomal subunit. Interacts with proteins S7 and S18. Binds to IF-3.

Located on the platform of the 30S subunit, it bridges several disparate RNA helices of the 16S rRNA. Forms part of the Shine-Dalgarno cleft in the 70S ribosome. In Thermosipho melanesiensis (strain DSM 12029 / CIP 104789 / BI429), this protein is Small ribosomal subunit protein uS11.